The following is a 611-amino-acid chain: ATP-dependent zinc metalloprotease FtsH 1 (611 aa).

Topologically, residues 1–6 (MNDNNK) are cytoplasmic. The helical transmembrane segment at 7–27 (IIRSMVLYLLIFIAIYAMVQL) threads the bilayer. Over 28 to 107 (YSQSTEPITD…KSEPQVGPPW (80 aa)) the chain is Extracellular. Residues 108 to 128 (WVQMLPSLFLIVIFIIFWYIF) traverse the membrane as a helical segment. Position 124–131 (124–131 (FWYIFMQQ)) interacts with ATP. Topologically, residues 129–611 (MQQAQGGGGS…GEDIEGVQFA (483 aa)) are cytoplasmic. Residue H423 participates in Zn(2+) binding. Residue E424 is part of the active site. Zn(2+) contacts are provided by H427 and D499.

It in the central section; belongs to the AAA ATPase family. The protein in the C-terminal section; belongs to the peptidase M41 family. As to quaternary structure, homohexamer. Zn(2+) serves as cofactor.

The protein resides in the cell membrane. Functionally, acts as a processive, ATP-dependent zinc metallopeptidase for both cytoplasmic and membrane proteins. Plays a role in the quality control of integral membrane proteins. This is ATP-dependent zinc metalloprotease FtsH 1 from Thermoanaerobacter sp. (strain X514).